Consider the following 450-residue polypeptide: Chromosomal replication initiator protein DnaA (450 aa).

Residues 1-69 (MHDVWRQATE…VGALSVTAGK (69 aa)) are domain I, interacts with DnaA modulators. A domain II region spans residues 69 to 113 (KKYFIELVVQEEDQNAEVPQAEDLIIKGHQEIEQPVTSQPETSSS). The interval 114-330 (SLNPKYTFEL…GMLIRLGAYS (217 aa)) is domain III, AAA+ region. ATP contacts are provided by Gly-158, Gly-160, Lys-161, and Ser-162. Residues 331–450 (SLQGIPITLD…IEDIKLILLK (120 aa)) are domain IV, binds dsDNA.

The protein belongs to the DnaA family. As to quaternary structure, oligomerizes as a right-handed, spiral filament on DNA at oriC.

It localises to the cytoplasm. Plays an essential role in the initiation and regulation of chromosomal replication. ATP-DnaA binds to the origin of replication (oriC) to initiate formation of the DNA replication initiation complex once per cell cycle. Binds the DnaA box (a 9 base pair repeat at the origin) and separates the double-stranded (ds)DNA. Forms a right-handed helical filament on oriC DNA; dsDNA binds to the exterior of the filament while single-stranded (ss)DNA is stabiized in the filament's interior. The ATP-DnaA-oriC complex binds and stabilizes one strand of the AT-rich DNA unwinding element (DUE), permitting loading of DNA polymerase. After initiation quickly degrades to an ADP-DnaA complex that is not apt for DNA replication. Binds acidic phospholipids. This is Chromosomal replication initiator protein DnaA from Pelobacter propionicus (strain DSM 2379 / NBRC 103807 / OttBd1).